Here is a 210-residue protein sequence, read N- to C-terminus: Chaperone protein TorD (210 aa).

This sequence belongs to the TorD/DmsD family. TorD subfamily.

It localises to the cytoplasm. Functionally, involved in the biogenesis of TorA. Acts on TorA before the insertion of the molybdenum cofactor and, as a result, probably favors a conformation of the apoenzyme that is competent for acquiring the cofactor. In Salmonella agona (strain SL483), this protein is Chaperone protein TorD.